A 43-amino-acid polypeptide reads, in one-letter code: Venom protein E2 (43 aa).

Disulfide bonds link cysteine 3-cysteine 20 and cysteine 14-cysteine 39.

In terms of tissue distribution, expressed by the venom gland.

The protein localises to the secreted. Functionally, neurotoxin. Blocks muscular nicotinic acetylcholine receptors (nAChR). This is Venom protein E2 from Micrurus pyrrhocryptus (Coral snake).